The following is a 411-amino-acid chain: uncharacterized protein (411 aa).

The first 21 residues, 1-21 (MHSRILLLLLMFAFNVGLINC), serve as a signal peptide directing secretion. The 40-residue stretch at 28–67 (PQSNCKIRCENGGMCVFDLERPDFHSCICLLGVYTGDRCQ) folds into the EGF-like domain. Disulfide bonds link Cys-32–Cys-42, Cys-36–Cys-54, and Cys-56–Cys-66. Positions 78–97 (TATSDETSHPMNIQHQQSQA) are enriched in polar residues. Disordered regions lie at residues 78–312 (TATS…EPIR) and 337–375 (HPIE…EYGM). The segment covering 100–230 (DDARRRDDER…VEKELNDKRT (131 aa)) has biased composition (basic and acidic residues). Residues 237–266 (FEYEGGDEEYPQVAEKEDEYDEGYETDNTE) are compositionally biased toward acidic residues. Low complexity predominate over residues 267-276 (DVTITTTKTT).

This is an uncharacterized protein from Caenorhabditis elegans.